The following is a 289-amino-acid chain: ATP synthase mitochondrial F1 complex assembly factor 2 (289 aa).

The N-terminal 40 residues, 1–40 (MWRRCLRLRDVGRRLLNLPRSGLTASEGLGPKLPTPIRAY), are a transit peptide targeting the mitochondrion. K133 carries the N6-succinyllysine modification.

The protein belongs to the ATP12 family. In terms of assembly, interacts with ATP5F1B; involved in the assembly of the F1 component of the mitochondrial ATP synthase (ATPase). Interacts with FMC1.

The protein resides in the mitochondrion inner membrane. Functionally, plays a role in the assembly of the F1 component of the mitochondrial ATP synthase (ATPase). This Bos taurus (Bovine) protein is ATP synthase mitochondrial F1 complex assembly factor 2 (ATPAF2).